The sequence spans 500 residues: Probable cytosol aminopeptidase (500 aa).

Mn(2+) contacts are provided by K264 and D269. The active site involves K276. D287, D346, and E348 together coordinate Mn(2+). Residue R350 is part of the active site.

It belongs to the peptidase M17 family. It depends on Mn(2+) as a cofactor.

It localises to the cytoplasm. The catalysed reaction is Release of an N-terminal amino acid, Xaa-|-Yaa-, in which Xaa is preferably Leu, but may be other amino acids including Pro although not Arg or Lys, and Yaa may be Pro. Amino acid amides and methyl esters are also readily hydrolyzed, but rates on arylamides are exceedingly low.. The enzyme catalyses Release of an N-terminal amino acid, preferentially leucine, but not glutamic or aspartic acids.. Its function is as follows. Presumably involved in the processing and regular turnover of intracellular proteins. Catalyzes the removal of unsubstituted N-terminal amino acids from various peptides. The polypeptide is Probable cytosol aminopeptidase (Rhodopseudomonas palustris (strain ATCC BAA-98 / CGA009)).